Reading from the N-terminus, the 102-residue chain is MSNSCDLTGHGWQNGNMVSHSNRKTKKRFMPNLQRVTVFSDVLKQKFRFKVSAKTIRTIDFKGGLDDFLRNTKNSKLSKSALVLKKRIMKKVSGDGTNDRKA.

Polar residues predominate over residues 1–20 (MSNSCDLTGHGWQNGNMVSH). The disordered stretch occupies residues 1-27 (MSNSCDLTGHGWQNGNMVSHSNRKTKK).

Belongs to the bacterial ribosomal protein bL28 family.

The sequence is that of Large ribosomal subunit protein bL28 from Neorickettsia sennetsu (strain ATCC VR-367 / Miyayama) (Ehrlichia sennetsu).